The primary structure comprises 108 residues: Peptidyl-prolyl cis-trans isomerase FKBP1C (108 aa).

A PPIase FKBP-type domain is found at 20–108 (SQTCVMHYTG…VFDVELLKLE (89 aa)).

The protein belongs to the FKBP-type PPIase family. FKBP1 subfamily.

The catalysed reaction is [protein]-peptidylproline (omega=180) = [protein]-peptidylproline (omega=0). In terms of biological role, catalyzes the cis-trans isomerization of proline imidic peptide bonds in oligopeptides. The chain is Peptidyl-prolyl cis-trans isomerase FKBP1C from Homo sapiens (Human).